The chain runs to 171 residues: Adenine phosphoribosyltransferase (171 aa).

The protein belongs to the purine/pyrimidine phosphoribosyltransferase family. Homodimer.

The protein resides in the cytoplasm. The enzyme catalyses AMP + diphosphate = 5-phospho-alpha-D-ribose 1-diphosphate + adenine. It functions in the pathway purine metabolism; AMP biosynthesis via salvage pathway; AMP from adenine: step 1/1. Functionally, catalyzes a salvage reaction resulting in the formation of AMP, that is energically less costly than de novo synthesis. In Geotalea uraniireducens (strain Rf4) (Geobacter uraniireducens), this protein is Adenine phosphoribosyltransferase.